The primary structure comprises 182 residues: ATP synthase subunit delta (182 aa).

Belongs to the ATPase delta chain family. As to quaternary structure, F-type ATPases have 2 components, F(1) - the catalytic core - and F(0) - the membrane proton channel. F(1) has five subunits: alpha(3), beta(3), gamma(1), delta(1), epsilon(1). CF(0) has four main subunits: a(1), b(1), b'(1) and c(10-14). The alpha and beta chains form an alternating ring which encloses part of the gamma chain. F(1) is attached to F(0) by a central stalk formed by the gamma and epsilon chains, while a peripheral stalk is formed by the delta, b and b' chains.

Its subcellular location is the cellular thylakoid membrane. In terms of biological role, f(1)F(0) ATP synthase produces ATP from ADP in the presence of a proton or sodium gradient. F-type ATPases consist of two structural domains, F(1) containing the extramembraneous catalytic core and F(0) containing the membrane proton channel, linked together by a central stalk and a peripheral stalk. During catalysis, ATP synthesis in the catalytic domain of F(1) is coupled via a rotary mechanism of the central stalk subunits to proton translocation. Its function is as follows. This protein is part of the stalk that links CF(0) to CF(1). It either transmits conformational changes from CF(0) to CF(1) or is implicated in proton conduction. This chain is ATP synthase subunit delta, found in Prochlorococcus marinus (strain MIT 9211).